A 110-amino-acid chain; its full sequence is Cell cycle protein GpsB (110 aa).

The stretch at 37–63 forms a coiled coil; sequence KDYTVYIALVKELQEENAKLKAKATSA. The interval 59–79 is disordered; that stretch reads KATSAPASRPAYASATSEPSH. Positions 60–75 are enriched in low complexity; the sequence is ATSAPASRPAYASATS.

Belongs to the GpsB family. In terms of assembly, forms polymers through the coiled coil domains. Interacts with PBP1, MreC and EzrA.

The protein resides in the cytoplasm. In terms of biological role, divisome component that associates with the complex late in its assembly, after the Z-ring is formed, and is dependent on DivIC and PBP2B for its recruitment to the divisome. Together with EzrA, is a key component of the system that regulates PBP1 localization during cell cycle progression. Its main role could be the removal of PBP1 from the cell pole after pole maturation is completed. Also contributes to the recruitment of PBP1 to the division complex. Not essential for septum formation. In Streptococcus thermophilus (strain CNRZ 1066), this protein is Cell cycle protein GpsB.